Here is a 250-residue protein sequence, read N- to C-terminus: UPF0309 protein BH0227 (250 aa).

Residues 31–214 (VAESIQNGGI…KRMADNGYEP (184 aa)) enclose the SIS domain.

It belongs to the UPF0309 family.

This Halalkalibacterium halodurans (strain ATCC BAA-125 / DSM 18197 / FERM 7344 / JCM 9153 / C-125) (Bacillus halodurans) protein is UPF0309 protein BH0227.